A 455-amino-acid chain; its full sequence is Bifunctional protein GlmU (455 aa).

The interval 1-226 (MSLDIVILAA…AMEVQGANDR (226 aa)) is pyrophosphorylase. UDP-N-acetyl-alpha-D-glucosamine contacts are provided by residues 8–11 (LAAG), Lys-22, Gln-73, 78–79 (GT), 99–101 (YGD), Gly-136, Glu-151, Asn-166, and Asn-224. Residue Asp-101 participates in Mg(2+) binding. Asn-224 is a binding site for Mg(2+). Positions 227-247 (KQLSELERHYQLREARRLMAG) are linker. The tract at residues 248–455 (GVTLRDPARF…WKRPVKIRKD (208 aa)) is N-acetyltransferase. Positions 330 and 348 each coordinate UDP-N-acetyl-alpha-D-glucosamine. Residue His-360 is the Proton acceptor of the active site. UDP-N-acetyl-alpha-D-glucosamine contacts are provided by Tyr-363 and Asn-374. Residues Ala-377, 383-384 (NY), Ser-402, Ala-420, and Arg-437 contribute to the acetyl-CoA site.

It in the N-terminal section; belongs to the N-acetylglucosamine-1-phosphate uridyltransferase family. This sequence in the C-terminal section; belongs to the transferase hexapeptide repeat family. Homotrimer. Requires Mg(2+) as cofactor.

The protein resides in the cytoplasm. The catalysed reaction is alpha-D-glucosamine 1-phosphate + acetyl-CoA = N-acetyl-alpha-D-glucosamine 1-phosphate + CoA + H(+). It catalyses the reaction N-acetyl-alpha-D-glucosamine 1-phosphate + UTP + H(+) = UDP-N-acetyl-alpha-D-glucosamine + diphosphate. It functions in the pathway nucleotide-sugar biosynthesis; UDP-N-acetyl-alpha-D-glucosamine biosynthesis; N-acetyl-alpha-D-glucosamine 1-phosphate from alpha-D-glucosamine 6-phosphate (route II): step 2/2. Its pathway is nucleotide-sugar biosynthesis; UDP-N-acetyl-alpha-D-glucosamine biosynthesis; UDP-N-acetyl-alpha-D-glucosamine from N-acetyl-alpha-D-glucosamine 1-phosphate: step 1/1. It participates in bacterial outer membrane biogenesis; LPS lipid A biosynthesis. Catalyzes the last two sequential reactions in the de novo biosynthetic pathway for UDP-N-acetylglucosamine (UDP-GlcNAc). The C-terminal domain catalyzes the transfer of acetyl group from acetyl coenzyme A to glucosamine-1-phosphate (GlcN-1-P) to produce N-acetylglucosamine-1-phosphate (GlcNAc-1-P), which is converted into UDP-GlcNAc by the transfer of uridine 5-monophosphate (from uridine 5-triphosphate), a reaction catalyzed by the N-terminal domain. The sequence is that of Bifunctional protein GlmU from Pseudomonas savastanoi pv. phaseolicola (strain 1448A / Race 6) (Pseudomonas syringae pv. phaseolicola (strain 1448A / Race 6)).